The following is an 80-amino-acid chain: MNCYLILTVALLLTSAMTGTTTAGQLNTKGVTLREDDRTFPCSSGLCACLPLDSYSYICLSPSSSTANCENDECISEDDW.

A signal peptide spans 1-23 (MNCYLILTVALLLTSAMTGTTTA). The propeptide occupies 24–37 (GQLNTKGVTLREDD). Intrachain disulfides connect C42–C59, C47–C69, and C49–C74.

As to expression, expressed by the venom duct.

The protein localises to the secreted. In Californiconus californicus (California cone), this protein is Conotoxin Cl9.5.